A 553-amino-acid chain; its full sequence is 3-amino-2-hydroxy-4-methoxybenzoate diazotase (553 aa).

The segment covering 157–167 (ALPAAGATGPA) has biased composition (low complexity). The segment at 157 to 178 (ALPAAGATGPAREGDAPPPAPV) is disordered.

Belongs to the ATP-dependent AMP-binding enzyme family.

The catalysed reaction is 3-amino-2-hydroxy-4-methoxybenzoate + nitrite + ATP = cremeomycin + AMP + diphosphate + H2O. The protein operates within antibiotic biosynthesis. Part of a gene cluster involved in the biosynthesis of cremeomycin, a light-sensitive o-diazoquinone with antibacterial and antiproliferative effects. Catalyzes the last step of cremeomycin biosynthesis, the diazotization of 3-amino-2-hydroxy-4-methoxybenzoate (3,2,4-AHMBA) with nitrite to generate cremeomycin. In Streptomyces cremeus, this protein is 3-amino-2-hydroxy-4-methoxybenzoate diazotase.